The following is a 201-amino-acid chain: MRSGEGSTAAAAAAEEEKVKVAAPFRLAELGLRVCAVPLAVASVWEMATNKQVDETYGEVRFSDLSGFRYLVWINAITAAYSVASILLSSCRFITRFDWLIFILDQASAYLLLTSASAAAEVVYLAREGDREVSWGEVCSYFGRFCGAATVSVALNAAALLCFMALSLISAFRVFTKFNPPSQSNSKQQLSQEQGKPVVSG.

Topologically, residues 1–26 (MRSGEGSTAAAAAAEEEKVKVAAPFR) are cytoplasmic. A helical transmembrane segment spans residues 27-47 (LAELGLRVCAVPLAVASVWEM). The Extracellular portion of the chain corresponds to 48-70 (ATNKQVDETYGEVRFSDLSGFRY). Residues 71-91 (LVWINAITAAYSVASILLSSC) form a helical membrane-spanning segment. Residues 92 to 98 (RFITRFD) lie on the Cytoplasmic side of the membrane. A helical membrane pass occupies residues 99–119 (WLIFILDQASAYLLLTSASAA). The Extracellular segment spans residues 120–148 (AEVVYLAREGDREVSWGEVCSYFGRFCGA). The chain crosses the membrane as a helical span at residues 149–169 (ATVSVALNAAALLCFMALSLI). Residues 170–201 (SAFRVFTKFNPPSQSNSKQQLSQEQGKPVVSG) are Cytoplasmic-facing. The segment covering 180–194 (PPSQSNSKQQLSQEQ) has biased composition (polar residues). Residues 180 to 201 (PPSQSNSKQQLSQEQGKPVVSG) are disordered.

It belongs to the Casparian strip membrane proteins (CASP) family. As to quaternary structure, homodimer and heterodimers.

The protein resides in the cell membrane. The sequence is that of CASP-like protein 2D1 from Oryza sativa subsp. indica (Rice).